We begin with the raw amino-acid sequence, 146 residues long: Large ribosomal subunit protein uL23m (146 aa).

A disordered region spans residues 108 to 138 (PDLFPEKDPRSPEPLEEELPQQRQSSDLRCP). Residues 111 to 120 (FPEKDPRSPE) show a composition bias toward basic and acidic residues.

This sequence belongs to the universal ribosomal protein uL23 family. Component of the mitochondrial ribosome large subunit (39S) which comprises a 16S rRNA and about 50 distinct proteins.

It is found in the mitochondrion. This Mus musculus (Mouse) protein is Large ribosomal subunit protein uL23m (Mrpl23).